Reading from the N-terminus, the 174-residue chain is Larval cuticle protein LCP-22 (174 aa).

Residues 1 to 16 (MKFAVVFACMVAAVAA) form the signal peptide. The Chitin-binding type R&amp;R domain maps to 82 to 153 (DGSYTYFYET…PTGNAIPTSP (72 aa)).

Its function is as follows. Component of the cuticle of the larva of Bombyx mori. In Bombyx mori (Silk moth), this protein is Larval cuticle protein LCP-22 (LCP22).